The sequence spans 333 residues: Adenosine deaminase (333 aa).

Zn(2+) contacts are provided by H12 and H14. Residues H14, D16, and G170 each coordinate substrate. Residue H197 participates in Zn(2+) binding. E200 acts as the Proton donor in catalysis. D278 provides a ligand contact to Zn(2+). D279 lines the substrate pocket.

It belongs to the metallo-dependent hydrolases superfamily. Adenosine and AMP deaminases family. Adenosine deaminase subfamily. Requires Zn(2+) as cofactor.

The catalysed reaction is adenosine + H2O + H(+) = inosine + NH4(+). It catalyses the reaction 2'-deoxyadenosine + H2O + H(+) = 2'-deoxyinosine + NH4(+). Functionally, catalyzes the hydrolytic deamination of adenosine and 2-deoxyadenosine. The polypeptide is Adenosine deaminase (Salmonella enteritidis PT4 (strain P125109)).